The sequence spans 317 residues: tRNA dimethylallyltransferase (317 aa).

Position 13–20 (13–20) interacts with ATP; the sequence is GPTASGKS. 15-20 contributes to the substrate binding site; sequence TASGKS.

The protein belongs to the IPP transferase family. As to quaternary structure, monomer. Mg(2+) is required as a cofactor.

The catalysed reaction is adenosine(37) in tRNA + dimethylallyl diphosphate = N(6)-dimethylallyladenosine(37) in tRNA + diphosphate. Functionally, catalyzes the transfer of a dimethylallyl group onto the adenine at position 37 in tRNAs that read codons beginning with uridine, leading to the formation of N6-(dimethylallyl)adenosine (i(6)A). The protein is tRNA dimethylallyltransferase of Kineococcus radiotolerans (strain ATCC BAA-149 / DSM 14245 / SRS30216).